The primary structure comprises 154 residues: Protein X (154 aa).

The mitochondrial targeting sequence stretch occupies residues 68–117 (PCALRFTSARRMETTVNTHMILPKVLHKRTLGLPAMSTIDLEAYFKDCLF).

It belongs to the orthohepadnavirus protein X family. As to quaternary structure, may form homodimer. May interact with host CEBPA, CFLAR, CREB1, DDB1, E4F1, HBXIP, HSPD1/HSP60, NFKBIA, POLR2E and SMAD4. Interacts with host SMC5-SMC6 complex and induces its degradation. Interacts with host TRPC4AP; leading to prevent ubiquitination of TRPC4AP. Interacts with host PLSCR1; this interaction promotes ubiquitination and degradation of HBx and impairs HBx-mediated cell proliferation. Post-translationally, a fraction may be phosphorylated in insect cells and HepG2 cells, a human hepatoblastoma cell line. Phosphorylated in vitro by host protein kinase C or mitogen-activated protein kinase. N-acetylated in insect cells.

The protein localises to the host cytoplasm. It is found in the host nucleus. It localises to the host mitochondrion. Functionally, multifunctional protein that plays a role in silencing host antiviral defenses and promoting viral transcription. Does not seem to be essential for HBV infection. May be directly involved in development of cirrhosis and liver cancer (hepatocellular carcinoma). Most of cytosolic activities involve modulation of cytosolic calcium. The effect on apoptosis is controversial depending on the cell types in which the studies have been conducted. May induce apoptosis by localizing in mitochondria and causing loss of mitochondrial membrane potential. May also modulate apoptosis by binding host CFLAR, a key regulator of the death-inducing signaling complex (DISC). Promotes viral transcription by using the host E3 ubiquitin ligase DDB1 to target the SMC5-SMC6 complex to proteasomal degradation. This host complex would otherwise bind to viral episomal DNA, and prevents its transcription. Moderately stimulates transcription of many different viral and cellular transcription elements. Promoters and enhancers stimulated by HBx contain DNA binding sites for NF-kappa-B, AP-1, AP-2, c-EBP, ATF/CREB, or the calcium-activated factor NF-AT. This chain is Protein X, found in Hepatitis B virus genotype C subtype ayw (isolate Australia/AustRC/1992) (HBV-C).